The primary structure comprises 149 residues: 3-dehydroquinate dehydratase (149 aa).

The active-site Proton acceptor is Y26. Residues N78, H84, and D91 each contribute to the substrate site. H104 serves as the catalytic Proton donor. Substrate contacts are provided by residues 105–106 (LS) and R115.

Belongs to the type-II 3-dehydroquinase family. In terms of assembly, homododecamer.

It catalyses the reaction 3-dehydroquinate = 3-dehydroshikimate + H2O. The protein operates within metabolic intermediate biosynthesis; chorismate biosynthesis; chorismate from D-erythrose 4-phosphate and phosphoenolpyruvate: step 3/7. Functionally, catalyzes a trans-dehydration via an enolate intermediate. The polypeptide is 3-dehydroquinate dehydratase (Polynucleobacter asymbioticus (strain DSM 18221 / CIP 109841 / QLW-P1DMWA-1) (Polynucleobacter necessarius subsp. asymbioticus)).